The chain runs to 167 residues: Leptin (167 aa).

Residues 1-21 (MRCGSLCRFLWLWSCLSYIEA) form the signal peptide. A disulfide bridge links Cys117 with Cys167.

It belongs to the leptin family.

The protein resides in the secreted. In terms of biological role, key player in the regulation of energy balance and body weight control. Once released into the circulation, has central and peripheral effects by binding LEPR, found in many tissues, which results in the activation of several major signaling pathways. In the hypothalamus, acts as an appetite-regulating factor that induces a decrease in food intake and an increase in energy consumption by inducing anorexinogenic factors and suppressing orexigenic neuropeptides, also regulates bone mass and secretion of hypothalamo-pituitary-adrenal hormones. In the periphery, increases basal metabolism, influences reproductive function, regulates pancreatic beta-cell function and insulin secretion, is pro-angiogenic for endothelial cell and affects innate and adaptive immunity. In the arcuate nucleus of the hypothalamus, activates by depolarization POMC neurons inducing FOS and SOCS3 expression to release anorexigenic peptides and inhibits by hyperpolarization NPY neurons inducing SOCS3 with a consequent reduction on release of orexigenic peptides. In addition to its known satiety inducing effect, has a modulatory role in nutrient absorption. In the intestine, reduces glucose absorption by enterocytes by activating PKC and leading to a sequential activation of p38, PI3K and ERK signaling pathways which exerts an inhibitory effect on glucose absorption. Acts as a growth factor on certain tissues, through the activation of different signaling pathways increases expression of genes involved in cell cycle regulation such as CCND1, via JAK2-STAT3 pathway, or VEGFA, via MAPK1/3 and PI3K-AKT1 pathways. May also play an apoptotic role via JAK2-STAT3 pathway and up-regulation of BIRC5 expression. Pro-angiogenic, has mitogenic activity on vascular endothelial cells and plays a role in matrix remodeling by regulating the expression of matrix metalloproteinases (MMPs) and tissue inhibitors of metalloproteinases (TIMPs). In innate immunity, modulates the activity and function of neutrophils by increasing chemotaxis and the secretion of oxygen radicals. Increases phagocytosis by macrophages and enhances secretion of pro-inflammatory mediators. Increases cytotoxic ability of NK cells. Plays a pro-inflammatory role, in synergy with IL1B, by inducing NOS2 which promotes the production of IL6, IL8 and Prostaglandin E2, through a signaling pathway that involves JAK2, PI3K, MAP2K1/MEK1 and MAPK14/p38. In adaptive immunity, promotes the switch of memory T-cells towards T helper-1 cell immune responses. Increases CD4(+)CD25(-) T-cell proliferation and reduces autophagy during TCR (T-cell receptor) stimulation, through MTOR signaling pathway activation and BCL2 up-regulation. The polypeptide is Leptin (LEP) (Phoca vitulina (Harbor seal)).